The following is a 34-amino-acid chain: Surfactant protein C (34 aa).

Residue C4 is the site of S-palmitoyl cysteine attachment.

Its subcellular location is the secreted. The protein localises to the extracellular space. The protein resides in the surface film. Its function is as follows. Pulmonary surfactant associated proteins promote alveolar stability by lowering the surface tension at the air-liquid interface in the peripheral air spaces. This Canis lupus familiaris (Dog) protein is Surfactant protein C (SFTPC).